The sequence spans 299 residues: 4-hydroxy-tetrahydrodipicolinate synthase (299 aa).

Threonine 45 is a binding site for pyruvate. The Proton donor/acceptor role is filled by tyrosine 133. Catalysis depends on lysine 161, which acts as the Schiff-base intermediate with substrate. Position 203 (isoleucine 203) interacts with pyruvate.

It belongs to the DapA family. In terms of assembly, homotetramer; dimer of dimers.

It localises to the cytoplasm. The enzyme catalyses L-aspartate 4-semialdehyde + pyruvate = (2S,4S)-4-hydroxy-2,3,4,5-tetrahydrodipicolinate + H2O + H(+). The protein operates within amino-acid biosynthesis; L-lysine biosynthesis via DAP pathway; (S)-tetrahydrodipicolinate from L-aspartate: step 3/4. Its function is as follows. Catalyzes the condensation of (S)-aspartate-beta-semialdehyde [(S)-ASA] and pyruvate to 4-hydroxy-tetrahydrodipicolinate (HTPA). In Blochmanniella pennsylvanica (strain BPEN), this protein is 4-hydroxy-tetrahydrodipicolinate synthase.